The following is a 373-amino-acid chain: Arfaptin-1 (373 aa).

The segment at 1–47 (MAQESPKNSAAEIPVTSNGEVDDAHEHGYNRDLKHSLPSGLGLSETQ) is disordered. Position 2 is an N-acetylalanine (Ala-2). A Phosphoserine modification is found at Ser-5. Residues 22-35 (DDAHEHGYNRDLKH) show a composition bias toward basic and acidic residues. Phosphoserine occurs at positions 36, 39, 69, 79, and 132. An AH domain is found at 153-353 (TVDLELEAQI…NQKQLELTLK (201 aa)). A Phosphothreonine modification is found at Thr-361.

As to quaternary structure, forms homodimers or heterodimers with ARFIP2. Interacts with non-myristoylated GTP-bound ARF3, but not to GDP-bound ARF3. Interacts with ARF1. Binds with lower affinity to ARF5 and with very little affinity to ARF6. Interacts with ARL1. Interacts with ATG9A. In terms of processing, phosphorylated by PRKD1; phosphorylation delocalizes ARFIP1 from the Golgi and disrupts its ability to inhibit the activity of ADP-ribosylation factor, an important component of the vesicle scission machinery.

The protein resides in the golgi apparatus. It is found in the trans-Golgi network membrane. Plays a role in controlling biogenesis of secretory granules at the trans-Golgi network. Mechanistically, binds ARF-GTP at the neck of a growing secretory granule precursor and forms a protective scaffold. Once the granule precursor has been completely loaded, active PRKD1 phosphorylates ARFIP1 and releases it from ARFs. In turn, ARFs induce fission. Through this mechanism, ensures proper secretory granule formation at the Golgi of pancreatic beta cells. In Mus musculus (Mouse), this protein is Arfaptin-1.